Here is a 597-residue protein sequence, read N- to C-terminus: Chaperonin 60 subunit beta 3, chloroplastic (597 aa).

A disordered region spans residues 1–20; it reads MASTFSATSSMGSSLAPPSN. The transit peptide at 1-29 directs the protein to the chloroplast; it reads MASTFSATSSMGSSLAPPSNRLSSFVSIS. Phosphoserine occurs at positions 97 and 474. Residues 387–489 adopt a coiled-coil conformation; that stretch reads STEEVVKKRV…KETLANDEEK (103 aa).

This sequence belongs to the chaperonin (HSP60) family. As to quaternary structure, part of the Cpn60 complex composed of 7 alpha and 7 beta subunits. Can also form a complex composed of 14 beta subunits only. Both complexes show ATPase activity. The Cpn60 complex interacts with the Cpn10 complex.

Its subcellular location is the plastid. The protein localises to the chloroplast. Its function is as follows. Involved in protein assisted folding. The protein is Chaperonin 60 subunit beta 3, chloroplastic (CPN60B3) of Arabidopsis thaliana (Mouse-ear cress).